Consider the following 150-residue polypeptide: 16 kDa phloem protein 1 (150 aa).

The C2 domain occupies 1–108 (MGMGMMEVHL…LAEGVRKGKS (108 aa)). Ca(2+) is bound by residues D20, D27, D78, D80, and D86.

The cofactor is Ca(2+). In terms of tissue distribution, sieve elements of leaves, stems, roots and flowers.

Its function is as follows. Binds to both sense and antisense RNA. Interacts with mesophyll plasmodesmata to mediate its own cell-to-cell transport and potentiate RNA trafficking. This Cucurbita maxima (Pumpkin) protein is 16 kDa phloem protein 1 (PP16-1).